The following is a 257-amino-acid chain: MALKALILNTTLRRSPSRSQTQGLIDKAVPLYEKEGIETEVVRVIDHDIEQEYWDDYDDWNAGEKARREDEWPWLLEKIREADILVIATPITLNMCTSAAHVILEKLNLMDELNGDTKQFPLYNKVAGLLMCGNEDGAHHVAGTVLNNLGRLGYSVPPNAAAYWLGPAGTGPGYIEGKGDRHFHTNKLIRFMVANTSHLARMLQETPYTTDLEACAQAAREESDDVFAIRVNVNTPAIRYKRFQKLGEVKVEESQLG.

FMN contacts are provided by residues 11–13 (TLR), 19–21 (SQT), 91–94 (ITLN), 132–136 (CGNED), and Tyr-240.

Belongs to the SsuE family. As to quaternary structure, homotetramer.

It carries out the reaction FMN + L-glutamate + 3 A + O2 + H2O = 8-amino-8-demethylriboflavin 5'-phosphate + 2-oxoglutarate + 3 AH2 + CO2 + H(+). It functions in the pathway antibiotic biosynthesis. In terms of biological role, involved in the biosynthesis of the riboflavin analog antibiotic roseoflavin (3,8-dimethylamino-riboflavin). Catalyzes the site-specific substitution of the C-8 methyl group of riboflavin-5'-phosphate (FMN) by an amino group to yield 8-amino-8-demethylriboflavin 5'-phosphate, via a combined oxidation, decarboxylation and transamination reaction. The catalysis is initiated by an oxidation step in which the C-8 methyl group on the dimethylbenzene ring of FMN is converted to a formyl group to yield the 8-demethyl-8-formylriboflavin-5'-phosphate (OHC-RP) intermediate. In the presence of thiamine, the formyl group is oxidized into a carboxyl group to yield the 8-demethyl-8-carboxyriboflavin-5'-phosphate (HO2C-RP) intermediate. Finally, in the presence of L-glutamate as an amino donor, decarboxylation and aminotransfer occur, resulting in production of 8-demethyl-8-aminoriboflavin-5'-phosphate. Addition of NAD (but not NADP) to the reaction increases the yield 1.7-fold. The reaction also proceeds without the addition of any electron acceptor, and it is possible that molecular oxygen serves this role. The sequence is that of 8-demethyl-8-aminoriboflavin-5'-phosphate synthase from Streptomyces davaonensis (strain DSM 101723 / JCM 4913 / KCC S-0913 / 768).